We begin with the raw amino-acid sequence, 356 residues long: Pyruvate dehydrogenase E1 component subunit beta, mitochondrial (356 aa).

A mitochondrion-targeting transit peptide spans 1-25 (MLSSILKKIQPSLLVNFRIITRTYA). Glu-85 lines the thiamine diphosphate pocket. K(+)-binding residues include Ile-138, Ala-186, Ile-187, Asp-189, and Asn-191.

As to quaternary structure, tetramer of 2 alpha and 2 beta subunits. It depends on thiamine diphosphate as a cofactor.

It localises to the mitochondrion matrix. It catalyses the reaction N(6)-[(R)-lipoyl]-L-lysyl-[protein] + pyruvate + H(+) = N(6)-[(R)-S(8)-acetyldihydrolipoyl]-L-lysyl-[protein] + CO2. In terms of biological role, the pyruvate dehydrogenase complex catalyzes the overall conversion of pyruvate to acetyl-CoA and CO(2). It contains multiple copies of three enzymatic components: pyruvate dehydrogenase (E1), dihydrolipoamide acetyltransferase (E2) and lipoamide dehydrogenase (E3). This Dictyostelium discoideum (Social amoeba) protein is Pyruvate dehydrogenase E1 component subunit beta, mitochondrial (pdhB).